Consider the following 616-residue polypeptide: Chaperone protein HscA (616 aa).

The protein belongs to the heat shock protein 70 family.

Chaperone involved in the maturation of iron-sulfur cluster-containing proteins. Has a low intrinsic ATPase activity which is markedly stimulated by HscB. Involved in the maturation of IscU. The sequence is that of Chaperone protein HscA from Escherichia coli O6:H1 (strain CFT073 / ATCC 700928 / UPEC).